Consider the following 304-residue polypeptide: Haloalkane dehalogenase (304 aa).

The AB hydrolase-1 domain occupies 42–154 (PIVFLHGNPT…DSVDLSPEFV (113 aa)). The active-site Nucleophile is the D114. The active-site Proton donor is E138. Residue H280 is the Proton acceptor of the active site.

Belongs to the haloalkane dehalogenase family. Type 2 subfamily. Monomer.

The catalysed reaction is 1-haloalkane + H2O = a halide anion + a primary alcohol + H(+). Functionally, catalyzes hydrolytic cleavage of carbon-halogen bonds in halogenated aliphatic compounds, leading to the formation of the corresponding primary alcohols, halide ions and protons. The polypeptide is Haloalkane dehalogenase (Agrobacterium fabrum (strain C58 / ATCC 33970) (Agrobacterium tumefaciens (strain C58))).